The sequence spans 1457 residues: Ras guanine nucleotide exchange factor C (1457 aa).

An RCC1 1 repeat occupies M1–D55. Disordered stretches follow at residues F75–N196, H209–K264, E282–P313, and Q376–T404. 2 stretches are compositionally biased toward low complexity: residues T83–N121 and S134–T158. Basic and acidic residues-rich tracts occupy residues I171–Q188 and H209–E224. Acidic residues predominate over residues N225 to D237. Residues S238–S249 show a composition bias toward basic and acidic residues. Low complexity-rich tracts occupy residues Q283–Q292 and Q376–Q403. 4 RCC1 repeats span residues G351–S401, W432–E483, G485–Q549, and S590–E647. The region spanning P650 to N971 is the DH domain. The span at L703–P715 shows a compositional bias: low complexity. The tract at residues L703 to I762 is disordered. The segment covering N724–G738 has biased composition (basic and acidic residues). The span at H739–I762 shows a compositional bias: low complexity. Positions G989 to F1109 constitute an N-terminal Ras-GEF domain. Residues L1127–T1210 are disordered. Positions L1138–N1211 form a coiled coil. The span at N1142–T1210 shows a compositional bias: low complexity. The region spanning Q1232–S1454 is the Ras-GEF domain.

Functionally, promotes the exchange of Ras-bound GDP by GTP. The polypeptide is Ras guanine nucleotide exchange factor C (gefC) (Dictyostelium discoideum (Social amoeba)).